The following is a 530-amino-acid chain: Autoinducer-2 kinase (530 aa).

This sequence belongs to the FGGY kinase family.

It is found in the cytoplasm. It catalyses the reaction (S)-4,5-dihydroxypentane-2,3-dione + ATP = (2S)-2-hydroxy-3,4-dioxopentyl phosphate + ADP + H(+). Catalyzes the phosphorylation of autoinducer-2 (AI-2) to phospho-AI-2, which subsequently inactivates the transcriptional regulator LsrR and leads to the transcription of the lsr operon. Phosphorylates the ring-open form of (S)-4,5-dihydroxypentane-2,3-dione (DPD), which is the precursor to all AI-2 signaling molecules, at the C5 position. The chain is Autoinducer-2 kinase from Escherichia coli O9:H4 (strain HS).